The chain runs to 308 residues: Acetyl-coenzyme A carboxylase carboxyl transferase subunit beta 1 (308 aa).

A CoA carboxyltransferase N-terminal domain is found at 25–294 (VWTKCTSCEQ…PLVVSVNESP (270 aa)). Zn(2+) is bound by residues Cys-29, Cys-32, Cys-48, and Cys-51. The segment at 29–51 (CTSCEQVLYHAELERNLEVCPKC) adopts a C4-type zinc-finger fold. The interval 288–308 (VSVNESPNEEPYSVPEVDEKG) is disordered.

This sequence belongs to the AccD/PCCB family. Acetyl-CoA carboxylase is a heterohexamer composed of biotin carboxyl carrier protein (AccB), biotin carboxylase (AccC) and two subunits each of ACCase subunit alpha (AccA) and ACCase subunit beta (AccD). The cofactor is Zn(2+).

It localises to the cytoplasm. It catalyses the reaction N(6)-carboxybiotinyl-L-lysyl-[protein] + acetyl-CoA = N(6)-biotinyl-L-lysyl-[protein] + malonyl-CoA. The protein operates within lipid metabolism; malonyl-CoA biosynthesis; malonyl-CoA from acetyl-CoA: step 1/1. In terms of biological role, component of the acetyl coenzyme A carboxylase (ACC) complex. Biotin carboxylase (BC) catalyzes the carboxylation of biotin on its carrier protein (BCCP) and then the CO(2) group is transferred by the transcarboxylase to acetyl-CoA to form malonyl-CoA. The polypeptide is Acetyl-coenzyme A carboxylase carboxyl transferase subunit beta 1 (Vibrio parahaemolyticus serotype O3:K6 (strain RIMD 2210633)).